A 287-amino-acid chain; its full sequence is ATP synthase gamma chain (287 aa).

This sequence belongs to the ATPase gamma chain family. F-type ATPases have 2 components, CF(1) - the catalytic core - and CF(0) - the membrane proton channel. CF(1) has five subunits: alpha(3), beta(3), gamma(1), delta(1), epsilon(1). CF(0) has three main subunits: a, b and c.

The protein localises to the cell inner membrane. Functionally, produces ATP from ADP in the presence of a proton gradient across the membrane. The gamma chain is believed to be important in regulating ATPase activity and the flow of protons through the CF(0) complex. The sequence is that of ATP synthase gamma chain from Alkalilimnicola ehrlichii (strain ATCC BAA-1101 / DSM 17681 / MLHE-1).